Here is a 150-residue protein sequence, read N- to C-terminus: Ribosome maturation factor RimP (150 aa).

The protein belongs to the RimP family.

It is found in the cytoplasm. Required for maturation of 30S ribosomal subunits. The polypeptide is Ribosome maturation factor RimP (Thermotoga petrophila (strain ATCC BAA-488 / DSM 13995 / JCM 10881 / RKU-1)).